A 398-amino-acid chain; its full sequence is 1-deoxy-D-xylulose 5-phosphate reductoisomerase (398 aa).

Threonine 10, glycine 11, serine 12, isoleucine 13, glycine 36, lysine 37, asparagine 38, and asparagine 124 together coordinate NADPH. Lysine 125 is a 1-deoxy-D-xylulose 5-phosphate binding site. NADPH is bound at residue glutamate 126. Residue aspartate 150 coordinates Mn(2+). Residues serine 151, glutamate 152, serine 186, and histidine 209 each coordinate 1-deoxy-D-xylulose 5-phosphate. Glutamate 152 lines the Mn(2+) pocket. Glycine 215 contributes to the NADPH binding site. 1-deoxy-D-xylulose 5-phosphate-binding residues include serine 222, asparagine 227, lysine 228, and glutamate 231. A Mn(2+)-binding site is contributed by glutamate 231.

Belongs to the DXR family. As to quaternary structure, homodimer. Requires Mg(2+) as cofactor. The cofactor is Mn(2+).

It catalyses the reaction 2-C-methyl-D-erythritol 4-phosphate + NADP(+) = 1-deoxy-D-xylulose 5-phosphate + NADPH + H(+). It participates in isoprenoid biosynthesis; isopentenyl diphosphate biosynthesis via DXP pathway; isopentenyl diphosphate from 1-deoxy-D-xylulose 5-phosphate: step 1/6. Catalyzes the NADPH-dependent rearrangement and reduction of 1-deoxy-D-xylulose-5-phosphate (DXP) to 2-C-methyl-D-erythritol 4-phosphate (MEP). The sequence is that of 1-deoxy-D-xylulose 5-phosphate reductoisomerase from Escherichia coli O157:H7.